A 348-amino-acid polypeptide reads, in one-letter code: Heat-inducible transcription repressor HrcA (348 aa).

The protein belongs to the HrcA family.

Functionally, negative regulator of class I heat shock genes (grpE-dnaK-dnaJ and groELS operons). Prevents heat-shock induction of these operons. This Thermodesulfovibrio yellowstonii (strain ATCC 51303 / DSM 11347 / YP87) protein is Heat-inducible transcription repressor HrcA.